Reading from the N-terminus, the 281-residue chain is UPF0294 protein VC_2238 (281 aa).

The protein belongs to the UPF0294 family.

The protein resides in the cytoplasm. This Vibrio cholerae serotype O1 (strain ATCC 39315 / El Tor Inaba N16961) protein is UPF0294 protein VC_2238.